We begin with the raw amino-acid sequence, 776 residues long: MSEAVRVPSPATPLVVAAAAPEERKGKESEREKLPPIVSAGAGATAGLDRGAKGQISTFSSFISAVSPKKEAAENRSSPAHLVFPNIKNVRDQPPICLDVRQKQRTSMDASSSEMKAPVLPEPIHPIQPKTVKDFQEDVEKVKSSGDWKAVHDFYLTTFDSFPELNAAFKKDATASFNTIEDSGINAKFVNAVYDTLLNTPQDIQKTVLKGIINSLLREWKGPRTKDDLRAYFVLLQNPQFNNTSTYVIYAHLLRQIATLVEADHHFLVHWFKRLSQKRFKQLVERLLQFISLRLFPAKPEEFPPVTKCSWWIPSAAKVLALLNTANNLVHPPLIPYTDFYNSTLDHIDLMEEYHTWQNFGNSHRFSFCQYPFVISVAAKKIIIQRDSEQQMINIARQSLVDKVSRRQRPDMNMLFLNMKVRRTHLVSDSLDELTRKRADLKKKLKVTFVGEAGLDMGGLTKEWFLLLIRQIFHPDYGMFTYHKDSHCHWFSSFKCDNYSEFRLVGILMGLAVYNSITLDIRFPPCCYKKLLSPPIIPSDQNIPVGICSVTVDDLCQIMPELAHGLSELLSHEGNVEEDFYSTFQVFQEEFGIIKSYNLKPGGDKISVTNQNRKEYVQLYTDFLLNKSIYKQFAAFYYGFHSVCASNALMLLRPEEVEILVCGSPDLDMHALQRSTQYDGYAKTDLTIKYFWDVVLGFPLDLQKKLLHFTTGSDRVPVGGMADLNFKISKNETSTNCLPVAHTCFNQLCLPPYKSKKDLKQKLIIGISNSEGFGLE.

The segment at 1 to 46 (MSEAVRVPSPATPLVVAAAAPEERKGKESEREKLPPIVSAGAGATA) is disordered. The span at 7 to 20 (VPSPATPLVVAAAA) shows a compositional bias: low complexity. At Ser-9 the chain carries Phosphoserine. Over residues 21–34 (PEERKGKESEREKL) the composition is skewed to basic and acidic residues. The HECT domain maps to 437-776 (KRADLKKKLK…ISNSEGFGLE (340 aa)). Cys-744 acts as the Glycyl thioester intermediate in catalysis.

It catalyses the reaction S-ubiquitinyl-[E2 ubiquitin-conjugating enzyme]-L-cysteine + [acceptor protein]-L-lysine = [E2 ubiquitin-conjugating enzyme]-L-cysteine + N(6)-ubiquitinyl-[acceptor protein]-L-lysine.. It participates in protein modification; protein ubiquitination. E3 ubiquitin-protein ligase which accepts ubiquitin from an E2 ubiquitin-conjugating enzyme in the form of a thioester and then directly transfers the ubiquitin to targeted substrates. This Pongo abelii (Sumatran orangutan) protein is Probable E3 ubiquitin-protein ligase HECTD2 (HECTD2).